Reading from the N-terminus, the 1342-residue chain is MVYSYTEKKRIRKDFGKRPQVLDVPYLLSIQLDSFQKFIEQDPEGQYGLEAAFRSVFPIQSYSGNSELQYVSYRLGEPVFDVKECQIRGVTYSAPLRVKLRLVIYEREAPEGTVKDIKEQEVYMGEIPLMTENGTFVINGTERVIVSQLHRSPGVFFDSDKGKTHSSGKVLYNARIIPYRGSWLDFEFDPKDNLFVRIDRRRKLPATIILRALDFTTEQILDLFFDKVIFEIRDNKLQMELVPERLRGETASFDIEANGKVYVEKGRRITARHIRQLEKDDVTLIEVPVEYIVGKVAAKDYIDESTGELICAANMELSLDLLAKLSQSGYKRIDTLFTNDLDHGPYMSETLRVDPTNDRLSALVEIYRMMRPGEPPTREAAENLFENLFFSEDRYDLSAVGRMKFNRSLMRDEIEGSGILSKNDIIEVMKKLIDIRNGKGEVDDIDHLGNRRIRSVGEMAENQFRVGLVRVERAVKERLSLGDLDMLMPQDMINAKPISAAVKEFFGSSQLSQFMDQNNPLSEITHKRRISALGPGGLTRERAGFEVRDVHPTHYGRVCPIETPEGPNIGLINSLSVYAQTNEYGFLETPYRRVRDGIVTDEIHYLSAIEEGNFVIAQANSNLDDEGRFVEDLVTCRSKGESSLFSRDQVDYMDVSTQQVVSVGASLIPFLEHDDANRALMGANMQRQAVPTLRADKPLVGTGMERAVAVDSGVTSVAKRGGMVQYVDASRIVIKVNEDEMFPGEAGIDIYNLTKYTRSNQNTCISQMPCVSLGEPIERGDVLADGPSTDLGELALGQNMRVAFMPWNGYNFEDSILVSERVVQEDRFTSIHIQELACVSRDTKLGPEEITADIPNVGEAALSKLDESGIVYIGAEVKGGDILVGKVTPKGETQLTPEEKLLRAIFGEKASDVKDSSLRVPNSVSGTVIDVQVFTRDGVEKDKRALEIEEMQLKQAKKDLTEELQILEAGLFARIHDVLVAGGVEAEKLEKLPRDRWLELGLADEAKQNQLEQLAEQYDELKAEFEKKLEAKRRKITQGDDLAPGVLKIVKVYLAVKRQIQPGDKMAGRHGNKGVISKINPIEDMPYDENGTPVDIVLNPLGVPSRMNIGQILETHLGMAAKGIGDKINAMLKQQQEVAKLREFIQRAYDLGDNTRQQVDLNTFSDDEVLRLAENLKKGLPVATPVFDGAKEREIKGLLELGGIPTSGQITLYDGRTGERFERQVTVGYMYMLKLNHLVDDKMHARSTGSYSLVTQQPLGGKAQFGGQRFGEMEVWALEAYGAAYTLQEMLTVKSDDVNGRTKMYKNIVDGSHQMEPGMPESFNVLLKEIRSLGINIELEDE.

Belongs to the RNA polymerase beta chain family. The RNAP catalytic core consists of 2 alpha, 1 beta, 1 beta' and 1 omega subunit. When a sigma factor is associated with the core the holoenzyme is formed, which can initiate transcription.

The catalysed reaction is RNA(n) + a ribonucleoside 5'-triphosphate = RNA(n+1) + diphosphate. DNA-dependent RNA polymerase catalyzes the transcription of DNA into RNA using the four ribonucleoside triphosphates as substrates. The protein is DNA-directed RNA polymerase subunit beta of Edwardsiella ictaluri (strain 93-146).